Here is a 1035-residue protein sequence, read N- to C-terminus: Valine--tRNA ligase (1035 aa).

Positions 45–55 match the 'HIGH' region motif; that stretch reads PNVTGALHLGH. The stretch at 253 to 281 forms a coiled coil; that stretch reads EKLSDANEKEAVDLNKQIEALQKRREERL. Residue K619 participates in ATP binding. Positions 967 to 1035 form a coiled coil; the sequence is DVEAELARLE…QDILKLQSKK (69 aa).

The protein belongs to the class-I aminoacyl-tRNA synthetase family. ValS type 1 subfamily. Monomer.

Its subcellular location is the cytoplasm. The catalysed reaction is tRNA(Val) + L-valine + ATP = L-valyl-tRNA(Val) + AMP + diphosphate. Functionally, catalyzes the attachment of valine to tRNA(Val). As ValRS can inadvertently accommodate and process structurally similar amino acids such as threonine, to avoid such errors, it has a 'posttransfer' editing activity that hydrolyzes mischarged Thr-tRNA(Val) in a tRNA-dependent manner. The polypeptide is Valine--tRNA ligase (Rhodopirellula baltica (strain DSM 10527 / NCIMB 13988 / SH1)).